A 217-amino-acid polypeptide reads, in one-letter code: Translation initiation factor 6 (217 aa).

Belongs to the eIF-6 family.

Functionally, binds to the 50S ribosomal subunit and prevents its association with the 30S ribosomal subunit to form the 70S initiation complex. In Picrophilus torridus (strain ATCC 700027 / DSM 9790 / JCM 10055 / NBRC 100828 / KAW 2/3), this protein is Translation initiation factor 6.